Here is a 263-residue protein sequence, read N- to C-terminus: Mediator of RNA polymerase II transcription subunit 7 (263 aa).

Residues Met1 to Leu10 are compositionally biased toward polar residues. Disordered regions lie at residues Met1 to Leu57, Ile101 to Ser122, and Gly222 to Ile247. The segment covering Phe24–Pro47 has biased composition (basic and acidic residues). Residues Ile101–Ala111 are compositionally biased toward polar residues. Positions Glu234–Ile247 are enriched in basic and acidic residues.

It belongs to the Mediator complex subunit 7 family. In terms of assembly, component of the Mediator complex.

Its subcellular location is the nucleus. In terms of biological role, component of the Mediator complex, a coactivator involved in the regulated transcription of nearly all RNA polymerase II-dependent genes. Mediator functions as a bridge to convey information from gene-specific regulatory proteins to the basal RNA polymerase II transcription machinery. Mediator is recruited to promoters by direct interactions with regulatory proteins and serves as a scaffold for the assembly of a functional preinitiation complex with RNA polymerase II and the general transcription factors. In Aspergillus niger (strain ATCC MYA-4892 / CBS 513.88 / FGSC A1513), this protein is Mediator of RNA polymerase II transcription subunit 7 (med7).